Consider the following 339-residue polypeptide: Cyclin-Y-like protein 1-A (339 aa).

Polar residues predominate over residues 1–13 (MGNTVTCCVSPDS). The interval 1-42 (MGNTVTCCVSPDSSPKEGRDREVTESGEPYQAQGEPQDGDVQ) is disordered. The segment covering 14–24 (SPKEGRDREVT) has biased composition (basic and acidic residues). The Cyclin N-terminal domain occupies 141 to 263 (DIFDEKLHPI…FLELLQFNIN (123 aa)).

Belongs to the cyclin family. Cyclin Y subfamily.

The polypeptide is Cyclin-Y-like protein 1-A (ccnyl1-a) (Xenopus laevis (African clawed frog)).